The sequence spans 412 residues: Chorismate synthase (412 aa).

2 residues coordinate NADP(+): Arg40 and Arg46. FMN contacts are provided by residues 135 to 137 (RAS), 256 to 257 (QA), Gly300, 315 to 319 (KPIST), and Arg341. A compositionally biased stretch (basic and acidic residues) spans 391-404 (QREPRQESSDEQPA). The segment at 391-412 (QREPRQESSDEQPARRAANTAG) is disordered.

This sequence belongs to the chorismate synthase family. As to quaternary structure, homotetramer. The cofactor is FMNH2.

The catalysed reaction is 5-O-(1-carboxyvinyl)-3-phosphoshikimate = chorismate + phosphate. The protein operates within metabolic intermediate biosynthesis; chorismate biosynthesis; chorismate from D-erythrose 4-phosphate and phosphoenolpyruvate: step 7/7. In terms of biological role, catalyzes the anti-1,4-elimination of the C-3 phosphate and the C-6 proR hydrogen from 5-enolpyruvylshikimate-3-phosphate (EPSP) to yield chorismate, which is the branch point compound that serves as the starting substrate for the three terminal pathways of aromatic amino acid biosynthesis. This reaction introduces a second double bond into the aromatic ring system. The sequence is that of Chorismate synthase from Mycobacteroides abscessus (strain ATCC 19977 / DSM 44196 / CCUG 20993 / CIP 104536 / JCM 13569 / NCTC 13031 / TMC 1543 / L948) (Mycobacterium abscessus).